The sequence spans 284 residues: GPN-loop GTPase 3 (284 aa).

G13–T18 serves as a coordination point for GTP. The short motif at G72–N74 is the Gly-Pro-Asn (GPN)-loop; involved in dimer interface element. T174–D177 serves as a coordination point for GTP. Positions K261–E284 are disordered.

The protein belongs to the GPN-loop GTPase family. Heterodimer with GPN1. Binds to RNA polymerase II (RNAPII). Interacts directly with subunits RPB4 and RPB7 and the CTD of RPB1.

In terms of biological role, small GTPase required for proper localization of RNA polymerase II (RNAPII). May act at an RNAP assembly step prior to nuclear import. The polypeptide is GPN-loop GTPase 3 (Bos taurus (Bovine)).